The chain runs to 164 residues: B-phycoerythrin alpha chain (164 aa).

2 residues coordinate (2R,3E)-phycoerythrobilin: Cys82 and Cys139.

This sequence belongs to the phycobiliprotein family. Heteromer of 6 alpha, 6 beta and one gamma chain. Contains two covalently linked bilin chromophores.

It is found in the plastid. Its subcellular location is the chloroplast thylakoid membrane. Its function is as follows. Light-harvesting photosynthetic bile pigment-protein from the phycobiliprotein complex. This chain is B-phycoerythrin alpha chain (cpeA), found in Porphyridium purpureum (Red alga).